The sequence spans 169 residues: ATP synthase subunit b (169 aa).

A helical transmembrane segment spans residues 11-31; the sequence is KLPLGNMLFIIISFLVLMVIL.

This sequence belongs to the ATPase B chain family. In terms of assembly, F-type ATPases have 2 components, F(1) - the catalytic core - and F(0) - the membrane proton channel. F(1) has five subunits: alpha(3), beta(3), gamma(1), delta(1), epsilon(1). F(0) has three main subunits: a(1), b(2) and c(10-14). The alpha and beta chains form an alternating ring which encloses part of the gamma chain. F(1) is attached to F(0) by a central stalk formed by the gamma and epsilon chains, while a peripheral stalk is formed by the delta and b chains.

The protein localises to the cell membrane. F(1)F(0) ATP synthase produces ATP from ADP in the presence of a proton or sodium gradient. F-type ATPases consist of two structural domains, F(1) containing the extramembraneous catalytic core and F(0) containing the membrane proton channel, linked together by a central stalk and a peripheral stalk. During catalysis, ATP synthesis in the catalytic domain of F(1) is coupled via a rotary mechanism of the central stalk subunits to proton translocation. In terms of biological role, component of the F(0) channel, it forms part of the peripheral stalk, linking F(1) to F(0). In Leuconostoc citreum (strain KM20), this protein is ATP synthase subunit b.